Here is a 478-residue protein sequence, read N- to C-terminus: Glutamyl-tRNA reductase (478 aa).

Substrate contacts are provided by residues 49–52 (TCNR), Ser109, 114–116 (EQQ), and Gln120. The active-site Nucleophile is Cys50. 191 to 196 (GAGSMG) serves as a coordination point for NADP(+).

The protein belongs to the glutamyl-tRNA reductase family. Homodimer.

It catalyses the reaction (S)-4-amino-5-oxopentanoate + tRNA(Glu) + NADP(+) = L-glutamyl-tRNA(Glu) + NADPH + H(+). Its pathway is porphyrin-containing compound metabolism; protoporphyrin-IX biosynthesis; 5-aminolevulinate from L-glutamyl-tRNA(Glu): step 1/2. Its function is as follows. Catalyzes the NADPH-dependent reduction of glutamyl-tRNA(Glu) to glutamate 1-semialdehyde (GSA). The sequence is that of Glutamyl-tRNA reductase from Rhodococcus opacus (strain B4).